We begin with the raw amino-acid sequence, 506 residues long: ATP synthase subunit alpha, plastid (506 aa).

Residue 170-177 participates in ATP binding; that stretch reads GDRQTGKT.

Belongs to the ATPase alpha/beta chains family. F-type ATPases have 2 components, CF(1) - the catalytic core - and CF(0) - the membrane proton channel. CF(1) has five subunits: alpha(3), beta(3), gamma(1), delta(1), epsilon(1). CF(0) has four main subunits: a, b, b' and c.

Its subcellular location is the plastid membrane. The enzyme catalyses ATP + H2O + 4 H(+)(in) = ADP + phosphate + 5 H(+)(out). Functionally, produces ATP from ADP in the presence of a proton gradient across the membrane. The alpha chain is a regulatory subunit. The protein is ATP synthase subunit alpha, plastid of Prototheca wickerhamii.